The following is a 193-amino-acid chain: Xanthine phosphoribosyltransferase (193 aa).

Positions 20 and 27 each coordinate xanthine. 128–132 is a 5-phospho-alpha-D-ribose 1-diphosphate binding site; the sequence is ANGQA. Lys-156 serves as a coordination point for xanthine.

The protein belongs to the purine/pyrimidine phosphoribosyltransferase family. Xpt subfamily. As to quaternary structure, homodimer.

Its subcellular location is the cytoplasm. It catalyses the reaction XMP + diphosphate = xanthine + 5-phospho-alpha-D-ribose 1-diphosphate. The protein operates within purine metabolism; XMP biosynthesis via salvage pathway; XMP from xanthine: step 1/1. Functionally, converts the preformed base xanthine, a product of nucleic acid breakdown, to xanthosine 5'-monophosphate (XMP), so it can be reused for RNA or DNA synthesis. The protein is Xanthine phosphoribosyltransferase of Streptococcus pneumoniae (strain CGSP14).